A 494-amino-acid chain; its full sequence is MFNYSGLNEECGVFGIWNHPEAAQLTYMGLHSLQHRGQEGAGIVVSDQNELKGERGLGLLTEAINDDQMERLKGYQHAIGHVRYATSGNKGIENIQPFLYHFYDMSVGICHNGNLINAKSLRQNLEKQGAIFHSSSDTEVIMHLIRRSKAPTFEEALKESLRKVKGGFTFAILTKDALYGAVDPNAIRPLVVGKMKDGTYILASETCAIDVLGAEFVQDIHAGEYVVINDKGITVKSYTHHTTTAISAMEYIYFARPDSTIAGKNVHAVRKASGKKLAQESPVNADMVIGVPNSSLSAASGYAEEIGLPYEMGLVKNQYVARTFIQPTQELREQGVRVKLSAVKDIVDGKNIILVDDSIVRGTTIRRIVKMLKDSGANKVHVRIASPEFMFPSFYGIDVSTTAELISASKSPEEIKDYIGADSLAYLSVDGLIESIGLDYDAPYSGLCVESFTGDYPAGLYDYEANYKAHLSHRQKQYISKNKHFFDSEGNLNV.

Residues 1-10 (MFNYSGLNEE) constitute a propeptide that is removed on maturation. Catalysis depends on Cys11, which acts as the Nucleophile. One can recognise a Glutamine amidotransferase type-2 domain in the interval 11-231 (CGVFGIWNHP…AGEYVVINDK (221 aa)). The Mg(2+) site is built by Ser294, Asp356, and Asp357.

In the C-terminal section; belongs to the purine/pyrimidine phosphoribosyltransferase family. Requires Mg(2+) as cofactor.

It carries out the reaction 5-phospho-beta-D-ribosylamine + L-glutamate + diphosphate = 5-phospho-alpha-D-ribose 1-diphosphate + L-glutamine + H2O. It functions in the pathway purine metabolism; IMP biosynthesis via de novo pathway; N(1)-(5-phospho-D-ribosyl)glycinamide from 5-phospho-alpha-D-ribose 1-diphosphate: step 1/2. In terms of biological role, catalyzes the formation of phosphoribosylamine from phosphoribosylpyrophosphate (PRPP) and glutamine. This chain is Amidophosphoribosyltransferase, found in Staphylococcus aureus (strain Mu50 / ATCC 700699).